Here is a 236-residue protein sequence, read N- to C-terminus: Cysteine-rich venom protein TRI1 (236 aa).

An N-terminal signal peptide occupies residues Met1–Gly18. One can recognise an SCP domain in the interval Val37–Tyr165. Cystine bridges form between Cys74–Cys152, Cys91–Cys166, Cys147–Cys163, Cys185–Cys192, Cys188–Cys197, Cys201–Cys234, Cys210–Cys228, and Cys219–Cys232. The ShKT domain maps to Cys201 to Cys234.

Belongs to the CRISP family. As to expression, expressed by the venom gland.

It localises to the secreted. Blocks contraction of smooth muscle elicited by high potassium-induced depolarization, but does not block caffeine-stimulated contraction. May target voltage-gated calcium channels on smooth muscle. The polypeptide is Cysteine-rich venom protein TRI1 (Trimorphodon biscutatus (Western lyre snake)).